Here is a 436-residue protein sequence, read N- to C-terminus: 3-ketoacyl-CoA thiolase (436 aa).

C99 (acyl-thioester intermediate) is an active-site residue. Residues H392 and C422 each act as proton acceptor in the active site.

The protein belongs to the thiolase-like superfamily. Thiolase family. Heterotetramer of two alpha chains (FadJ) and two beta chains (FadI).

It localises to the cytoplasm. It carries out the reaction an acyl-CoA + acetyl-CoA = a 3-oxoacyl-CoA + CoA. It participates in lipid metabolism; fatty acid beta-oxidation. In terms of biological role, catalyzes the final step of fatty acid oxidation in which acetyl-CoA is released and the CoA ester of a fatty acid two carbons shorter is formed. This is 3-ketoacyl-CoA thiolase from Escherichia coli O7:K1 (strain IAI39 / ExPEC).